A 376-amino-acid chain; its full sequence is Succinyl-diaminopimelate desuccinylase (376 aa).

Position 67 (His67) interacts with Zn(2+). Residue Asp69 is part of the active site. Asp100 is a binding site for Zn(2+). Glu134 (proton acceptor) is an active-site residue. Zn(2+)-binding residues include Glu135, Glu163, and His349.

The protein belongs to the peptidase M20A family. DapE subfamily. In terms of assembly, homodimer. Zn(2+) serves as cofactor. It depends on Co(2+) as a cofactor.

The enzyme catalyses N-succinyl-(2S,6S)-2,6-diaminopimelate + H2O = (2S,6S)-2,6-diaminopimelate + succinate. The protein operates within amino-acid biosynthesis; L-lysine biosynthesis via DAP pathway; LL-2,6-diaminopimelate from (S)-tetrahydrodipicolinate (succinylase route): step 3/3. Catalyzes the hydrolysis of N-succinyl-L,L-diaminopimelic acid (SDAP), forming succinate and LL-2,6-diaminopimelate (DAP), an intermediate involved in the bacterial biosynthesis of lysine and meso-diaminopimelic acid, an essential component of bacterial cell walls. This is Succinyl-diaminopimelate desuccinylase from Xanthomonas campestris pv. campestris (strain 8004).